The primary structure comprises 702 residues: Ribosomal RNA large subunit methyltransferase K/L (702 aa).

Positions 43-154 constitute a THUMP domain; it reads LVYQSLMWSR…KETASIALDL (112 aa).

The protein belongs to the methyltransferase superfamily. RlmKL family.

It is found in the cytoplasm. The enzyme catalyses guanosine(2445) in 23S rRNA + S-adenosyl-L-methionine = N(2)-methylguanosine(2445) in 23S rRNA + S-adenosyl-L-homocysteine + H(+). It catalyses the reaction guanosine(2069) in 23S rRNA + S-adenosyl-L-methionine = N(2)-methylguanosine(2069) in 23S rRNA + S-adenosyl-L-homocysteine + H(+). In terms of biological role, specifically methylates the guanine in position 2445 (m2G2445) and the guanine in position 2069 (m7G2069) of 23S rRNA. This Shigella dysenteriae serotype 1 (strain Sd197) protein is Ribosomal RNA large subunit methyltransferase K/L.